Here is a 453-residue protein sequence, read N- to C-terminus: MASLMLSLGSTSLLPREINKDKLKLGTSASNPFLKAKSFSRVTMTVAVKPSRFEGITMAPPDPILGVSEAFKADTNGMKLNLGVGAYRTEELQPYVLNVVKKAENLMLERGDNKEYLPIEGLAAFNKATAELLFGAGHPVIKEQRVATIQGLSGTGSLRLAAALIERYFPGAKVVISSPTWGNHKNIFNDAKVPWSEYRYYDPKTIGLDFEGMIADIKEAPEGSFILLHGCAHNPTGIDPTPEQWVKIADVIQEKNHIPFFDVAYQGFASGSLDEDAASVRLFAERGMEFFVAQSYSKNLGLYAERIGAINVVCSSADAATRVKSQLKRIARPMYSNPPVHGARIVANVVGDVTMFSEWKAEMEMMAGRIKTVRQELYDSLVSKDKSGKDWSFILKQIGMFSFTGLNKAQSDNMTDKWHVYMTKDGRISLAGLSLAKCEYLADAIIDSYHNVS.

The N-terminal 44 residues, 1-44 (MASLMLSLGSTSLLPREINKDKLKLGTSASNPFLKAKSFSRVTM), are a transit peptide targeting the chloroplast. L-aspartate-binding residues include glycine 85, tryptophan 181, and asparagine 234. N6-(pyridoxal phosphate)lysine is present on lysine 298. Arginine 427 lines the L-aspartate pocket.

This sequence belongs to the class-I pyridoxal-phosphate-dependent aminotransferase family. Homodimer. The cofactor is pyridoxal 5'-phosphate.

The protein localises to the plastid. It is found in the chloroplast. Its subcellular location is the amyloplast. The enzyme catalyses L-aspartate + 2-oxoglutarate = oxaloacetate + L-glutamate. Amino acid aminotransferase important for the metabolism of amino acids and Krebs-cycle related organic acids. No activity with D-Asp or D-Ala as amino donors. In plants, it is involved in nitrogen metabolism and in aspects of carbon and energy metabolism. The protein is Aspartate aminotransferase, chloroplastic (ASP5) of Arabidopsis thaliana (Mouse-ear cress).